The following is a 610-amino-acid chain: Butyryl-CoA dehydrogenase Swol_2052 (610 aa).

Glutamate 451 acts as the Proton acceptor in catalysis.

The protein belongs to the acyl-CoA dehydrogenase family. The cofactor is FAD.

It localises to the cytoplasm. It carries out the reaction butanoyl-CoA + oxidized [electron-transfer flavoprotein] + H(+) = (2E)-butenoyl-CoA + reduced [electron-transfer flavoprotein]. The enzyme catalyses a short-chain 2,3-saturated fatty acyl-CoA + oxidized [electron-transfer flavoprotein] + H(+) = a short-chain (2E)-enoyl-CoA + reduced [electron-transfer flavoprotein]. The protein operates within lipid metabolism; butanoate metabolism. Functionally, involved in syntrophic growth of S.wolfei with butyrate, as part of the butyrate oxidation pathway. Catalyzes the oxidation of butanoyl-CoA to crotonyl-CoA. Probably passes the electrons released by this reaction on to electron-transfer flavoproteins (EtfAB) to finally generate hydrogen and/or formate. The chain is Butyryl-CoA dehydrogenase Swol_2052 from Syntrophomonas wolfei subsp. wolfei (strain DSM 2245B / Goettingen).